The chain runs to 135 residues: Ribosome-binding factor A (135 aa).

Belongs to the RbfA family. Monomer. Binds 30S ribosomal subunits, but not 50S ribosomal subunits or 70S ribosomes.

It is found in the cytoplasm. In terms of biological role, one of several proteins that assist in the late maturation steps of the functional core of the 30S ribosomal subunit. Associates with free 30S ribosomal subunits (but not with 30S subunits that are part of 70S ribosomes or polysomes). Required for efficient processing of 16S rRNA. May interact with the 5'-terminal helix region of 16S rRNA. The sequence is that of Ribosome-binding factor A from Aliivibrio fischeri (strain ATCC 700601 / ES114) (Vibrio fischeri).